We begin with the raw amino-acid sequence, 280 residues long: Thymidylate synthase (280 aa).

Arg-21 is a binding site for dUMP. Position 51 (His-51) interacts with (6R)-5,10-methylene-5,6,7,8-tetrahydrofolate. 142-143 (RR) serves as a coordination point for dUMP. Cys-162 functions as the Nucleophile in the catalytic mechanism. Residues 182–185 (RSAD), Asn-193, and 223–225 (HLY) contribute to the dUMP site. Residue Asp-185 coordinates (6R)-5,10-methylene-5,6,7,8-tetrahydrofolate. Residue Ala-279 coordinates (6R)-5,10-methylene-5,6,7,8-tetrahydrofolate.

The protein belongs to the thymidylate synthase family. Bacterial-type ThyA subfamily. Homodimer.

Its subcellular location is the cytoplasm. It catalyses the reaction dUMP + (6R)-5,10-methylene-5,6,7,8-tetrahydrofolate = 7,8-dihydrofolate + dTMP. Its pathway is pyrimidine metabolism; dTTP biosynthesis. In terms of biological role, catalyzes the reductive methylation of 2'-deoxyuridine-5'-monophosphate (dUMP) to 2'-deoxythymidine-5'-monophosphate (dTMP) while utilizing 5,10-methylenetetrahydrofolate (mTHF) as the methyl donor and reductant in the reaction, yielding dihydrofolate (DHF) as a by-product. This enzymatic reaction provides an intracellular de novo source of dTMP, an essential precursor for DNA biosynthesis. This chain is Thymidylate synthase, found in Acinetobacter baumannii (strain AB307-0294).